The sequence spans 320 residues: UDP-N-acetylenolpyruvoylglucosamine reductase (320 aa).

Positions 35–216 constitute an FAD-binding PCMH-type domain; it reads RAGGPAQVLF…KQAMDEVQHH (182 aa). Residue Arg181 is part of the active site. The active-site Proton donor is the Ser230. Glu300 is an active-site residue.

Belongs to the MurB family. Requires FAD as cofactor.

It is found in the cytoplasm. It catalyses the reaction UDP-N-acetyl-alpha-D-muramate + NADP(+) = UDP-N-acetyl-3-O-(1-carboxyvinyl)-alpha-D-glucosamine + NADPH + H(+). It functions in the pathway cell wall biogenesis; peptidoglycan biosynthesis. Its function is as follows. Cell wall formation. This is UDP-N-acetylenolpyruvoylglucosamine reductase from Brucella anthropi (strain ATCC 49188 / DSM 6882 / CCUG 24695 / JCM 21032 / LMG 3331 / NBRC 15819 / NCTC 12168 / Alc 37) (Ochrobactrum anthropi).